A 1152-amino-acid chain; its full sequence is Calcium-activated potassium channel subunit alpha-1 (1152 aa).

Residues 1 to 37 are disordered; it reads MSSNIHANHLSLDASSSSSSSSSSSSSSSSSSSSVHE. The Extracellular segment spans residues 1-60; the sequence is MSSNIHANHLSLDASSSSSSSSSSSSSSSSSSSSVHEPKMDALIIPVTMEVPCDSRGQRM. Residues 15–34 show a composition bias toward low complexity; that stretch reads SSSSSSSSSSSSSSSSSSSS. A helical membrane pass occupies residues 61–81; the sequence is WWAFLASSMVTFFGGLFIILL. Residues 82–152 are Cytoplasmic-facing; it reads WRTLKYLWTV…MISAQTLTGR (71 aa). Residues C92, C93, and C95 are each lipidated (S-palmitoyl cysteine). Residues 153 to 173 traverse the membrane as a helical segment; the sequence is VLVVLVFALSIGALVIYFIDS. The Extracellular segment spans residues 174–188; it reads SNPIESCQNFYKDFT. The helical transmembrane segment at 189–209 threads the bilayer; the sequence is LQIDMAFNVFFLLYFGLRFIA. At 210–213 the chain is on the cytoplasmic side; sequence ANDK. The helical transmembrane segment at 214–234 threads the bilayer; it reads LWFWLEVNSVVDFFTVPPVFV. The Extracellular segment spans residues 235–238; sequence SVYL. Residues 239-259 form a helical; Voltage-sensor membrane-spanning segment; sequence NRSWLGLRFLRALRLIQFSEI. The Cytoplasmic segment spans residues 260–274; sequence LQFLNILKTSNSIKL. A helical membrane pass occupies residues 275–295; it reads VNLLSIFISTWLTAAGFIHLV. The Extracellular portion of the chain corresponds to 296–309; it reads ENSGDPWENFQNNQ. The pore-forming intramembrane region spans 310 to 332; sequence ALTYWECVYLLMVTMSTVGYGDV. The short motif at 326–329 is the Selectivity for potassium element; the sequence is TVGY. Topologically, residues 333-341 are extracellular; that stretch reads YAKTTLGRL. The chain crosses the membrane as a helical span at residues 342–362; it reads FMVFFILGGLAMFASYVPEII. The Cytoplasmic portion of the chain corresponds to 363-1152; the sequence is ELIGNRKKYG…KQKYVQEERL (790 aa). In terms of domain architecture, RCK N-terminal 1 spans 381 to 523; sequence RKHIVVCGHI…WNWKEGDDAI (143 aa). Mg(2+) is bound by residues E413, Q436, and E438. Positions 530 to 550 are segment S7; that stretch reads LGFIAQSCLAQGLSTMLANLF. Positions 587–607 are segment S8; it reads LSFPTVCELCFVKLKLLMIAI. Residues 651–655 form a heme-binding motif region; it reads CKACH. The interval 675–703 is disordered; sequence EQPSTLSPKKKQRNGGMRNSPSSSPKLMR. A Phosphothreonine modification is found at T679. A phosphoserine mark is found at S681, S694, and S698. The segment at 753 to 773 is segment S9; it reads VLSGHVVVCIFGDVSSALIGL. The 145-residue stretch at 755-899 folds into the RCK N-terminal 2 domain; that stretch reads SGHVVVCIFG…MDRSSPDNSP (145 aa). The residue at position 886 (T886) is a Phosphothreonine. 2 positions are modified to phosphoserine: S894 and S898. The Calcium bowl signature appears at 919–941; that stretch reads TELVNDTNVQFLDQDDDDDPDTE. Positions 928, 931, 934, and 936 each coordinate Ca(2+). Residues 948 to 968 form a segment S10 region; it reads FACGTAFAVSVLDSLMSATYF. The span at 1102 to 1127 shows a compositional bias: low complexity; the sequence is RASLSHSSHSSQSSSKKSSSVHSIPS. Residues 1102-1152 form a disordered region; that stretch reads RASLSHSSHSSQSSSKKSSSVHSIPSTANRQNRPKSRESRDKQKYVQEERL. Positions 1136-1152 are enriched in basic and acidic residues; sequence KSRESRDKQKYVQEERL. Phosphoserine occurs at positions 1137 and 1140.

This sequence belongs to the potassium channel family. Calcium-activated (TC 1.A.1.3) subfamily. KCa1.1/KCNMA1 sub-subfamily. Homotetramer; which constitutes the calcium-activated potassium channel. Interacts with beta subunits KCNMB1, KCNMB2, KCNMB3 and KCNMB4. Interacts with gamma subunits LRRC26, LRRC38, LRRC52 and LRRC55. Beta and gamma subunits are accessory, and modulate its activity. Interacts with RAB11B. In terms of processing, phosphorylated. Phosphorylation by kinases such as PKA and/or PKG. In smooth muscles, phosphorylation affects its activity. Post-translationally, palmitoylation by ZDHHC22 and ZDHHC23 within the intracellular linker between the S0 and S1 transmembrane domains regulates localization to the plasma membrane. Depalmitoylated by LYPLA1 and LYPLAL1, leading to retard exit from the trans-Golgi network.

It is found in the cell membrane. It carries out the reaction K(+)(in) = K(+)(out). Ethanol and carbon monoxide-bound heme increase channel activation. Heme inhibits channel activation. In terms of biological role, potassium channel activated by both membrane depolarization or increase in cytosolic Ca(2+) that mediates export of K(+). It is also activated by the concentration of cytosolic Mg(2+). Its activation dampens the excitatory events that elevate the cytosolic Ca(2+) concentration and/or depolarize the cell membrane. It therefore contributes to repolarization of the membrane potential. Plays a key role in controlling excitability in a number of systems, such as regulation of the contraction of smooth muscle, the tuning of hair cells in the cochlea, regulation of transmitter release, and innate immunity. In smooth muscles, its activation by high level of Ca(2+), caused by ryanodine receptors in the sarcoplasmic reticulum, regulates the membrane potential. In cochlea cells, its number and kinetic properties partly determine the characteristic frequency of each hair cell and thereby helps to establish a tonotopic map. Kinetics of KCNMA1 channels are determined by alternative splicing, phosphorylation status and its combination with modulating beta subunits. Highly sensitive to both iberiotoxin (IbTx) and charybdotoxin (CTX). In Sus scrofa (Pig), this protein is Calcium-activated potassium channel subunit alpha-1 (KCNMA1).